A 298-amino-acid polypeptide reads, in one-letter code: Pantothenate synthetase (298 aa).

Met30–His37 contributes to the ATP binding site. The Proton donor role is filled by His37. Gln61 serves as a coordination point for (R)-pantoate. Gln61 contributes to the beta-alanine binding site. Gly149–Asp152 contacts ATP. Gln155 is a binding site for (R)-pantoate. ATP-binding positions include Val178 and Met186–Arg189.

It belongs to the pantothenate synthetase family. In terms of assembly, homodimer.

Its subcellular location is the cytoplasm. It catalyses the reaction (R)-pantoate + beta-alanine + ATP = (R)-pantothenate + AMP + diphosphate + H(+). It participates in cofactor biosynthesis; (R)-pantothenate biosynthesis; (R)-pantothenate from (R)-pantoate and beta-alanine: step 1/1. Functionally, catalyzes the condensation of pantoate with beta-alanine in an ATP-dependent reaction via a pantoyl-adenylate intermediate. The sequence is that of Pantothenate synthetase from Aliivibrio salmonicida (strain LFI1238) (Vibrio salmonicida (strain LFI1238)).